The primary structure comprises 596 residues: A-type ATP synthase subunit A (596 aa).

241 to 248 (GPFGSGKT) contributes to the ATP binding site.

It belongs to the ATPase alpha/beta chains family. As to quaternary structure, has multiple subunits with at least A(3), B(3), C, D, E, F, H, I and proteolipid K(x).

The protein localises to the cell membrane. The enzyme catalyses ATP + H2O + 4 H(+)(in) = ADP + phosphate + 5 H(+)(out). In terms of biological role, component of the A-type ATP synthase that produces ATP from ADP in the presence of a proton gradient across the membrane. The A chain is the catalytic subunit. The protein is A-type ATP synthase subunit A of Ignicoccus hospitalis (strain KIN4/I / DSM 18386 / JCM 14125).